Here is a 175-residue protein sequence, read N- to C-terminus: 2-oxo-4-hydroxy-4-carboxy-5-ureidoimidazoline decarboxylase (175 aa).

Catalysis depends on H67, which acts as the Proton donor. Residues P68, 84-88 (SQNEQ), and 119-123 (FVICA) each bind substrate. The short motif at 173–175 (TKL) is the Microbody targeting signal element.

It belongs to the OHCU decarboxylase family.

It localises to the peroxisome. The enzyme catalyses 5-hydroxy-2-oxo-4-ureido-2,5-dihydro-1H-imidazole-5-carboxylate + H(+) = (S)-allantoin + CO2. The protein operates within purine metabolism; urate degradation; (S)-allantoin from urate: step 3/3. Its function is as follows. Catalyzes the stereoselective decarboxylation of 2-oxo-4-hydroxy-4-carboxy-5-ureidoimidazoline (OHCU) to (S)-allantoin. The chain is 2-oxo-4-hydroxy-4-carboxy-5-ureidoimidazoline decarboxylase (urad) from Xenopus laevis (African clawed frog).